Reading from the N-terminus, the 525-residue chain is GMP synthase [glutamine-hydrolyzing] (525 aa).

The 199-residue stretch at 9–207 (RILILDFGSQ…VRDICQCEAL (199 aa)) folds into the Glutamine amidotransferase type-1 domain. The Nucleophile role is filled by Cys86. Active-site residues include His181 and Glu183. Positions 208–400 (WTPAKIIDDA…LGLPYDMLYR (193 aa)) constitute a GMPS ATP-PPase domain. 235 to 241 (SGGVDSS) is an ATP binding site.

As to quaternary structure, homodimer.

The enzyme catalyses XMP + L-glutamine + ATP + H2O = GMP + L-glutamate + AMP + diphosphate + 2 H(+). It functions in the pathway purine metabolism; GMP biosynthesis; GMP from XMP (L-Gln route): step 1/1. In terms of biological role, catalyzes the synthesis of GMP from XMP. The protein is GMP synthase [glutamine-hydrolyzing] of Escherichia coli (strain K12 / MC4100 / BW2952).